The primary structure comprises 100 residues: Aspartyl/glutamyl-tRNA(Asn/Gln) amidotransferase subunit C (100 aa).

Belongs to the GatC family. As to quaternary structure, heterotrimer of A, B and C subunits.

The catalysed reaction is L-glutamyl-tRNA(Gln) + L-glutamine + ATP + H2O = L-glutaminyl-tRNA(Gln) + L-glutamate + ADP + phosphate + H(+). It catalyses the reaction L-aspartyl-tRNA(Asn) + L-glutamine + ATP + H2O = L-asparaginyl-tRNA(Asn) + L-glutamate + ADP + phosphate + 2 H(+). In terms of biological role, allows the formation of correctly charged Asn-tRNA(Asn) or Gln-tRNA(Gln) through the transamidation of misacylated Asp-tRNA(Asn) or Glu-tRNA(Gln) in organisms which lack either or both of asparaginyl-tRNA or glutaminyl-tRNA synthetases. The reaction takes place in the presence of glutamine and ATP through an activated phospho-Asp-tRNA(Asn) or phospho-Glu-tRNA(Gln). In Streptococcus sanguinis (strain SK36), this protein is Aspartyl/glutamyl-tRNA(Asn/Gln) amidotransferase subunit C.